The primary structure comprises 575 residues: Transcription factor COE2 (575 aa).

The interval 62–65 is interaction with DNA; the sequence is RKSN. A C5-type zinc finger spans residues 150 to 169; sequence CRVLLTHEVMCSRCCEKKSC. 2 interaction with DNA regions span residues 196–203 and 235–238; these read NCLKTAGN and NNSK. One can recognise an IPT/TIG domain in the interval 253–336; it reads PCIKAISPSE…KGAPGRFIYT (84 aa). Positions 441 to 453 are enriched in polar residues; it reads STQGNNQGYIRNT. The tract at residues 441-479 is disordered; the sequence is STQGNNQGYIRNTSSISPRGYSSSSTPQQSNYSTSSNSM. The span at 454-479 shows a compositional bias: low complexity; that stretch reads SSISPRGYSSSSTPQQSNYSTSSNSM.

This sequence belongs to the COE family. As to quaternary structure, forms either a homodimer or a heterodimer with a related family member. Interacts with SIX1. As to expression, in adult expressed in olfactory epithelium and at a much lower level in Purkinje cells of the cerebellum. In embryo expressed in epithalamus, in cells near the ventricular zone of mesencephalon and on the ventral surface of rhombencephalon, in the developing vomeronasal organ, at a lower level in developing spinal cord. Not expressed in developing retina, inner ear, dorsal root ganglia, trigeminal ganglia and glossopharyngeal ganglia.

The protein resides in the nucleus. Transcription factor that, in osteoblasts, activates the decoy receptor for RANKL, TNFRSF11B, which in turn regulates osteoclast differentiation. Acts in synergy with the Wnt-responsive LEF1/CTNNB1 pathway. Recognizes variations of the palindromic sequence 5'-ATTCCCNNGGGAATT-3'. This Mus musculus (Mouse) protein is Transcription factor COE2 (Ebf2).